The chain runs to 822 residues: Fibroblast growth factor receptor 1 (822 aa).

The first 21 residues, 1–21 (MWSWKCLLFWAVLVTATLCTA), serve as a signal peptide directing secretion. Residues 22–376 (RPSPTLPEQA…AVMTSPLYLE (355 aa)) are Extracellular-facing. Positions 25–119 (PTLPEQAQPW…DTTYFSVNVS (95 aa)) constitute an Ig-like C2-type 1 domain. C55 and C101 are oxidised to a cystine. 2 N-linked (GlcNAc...) asparagine glycosylation sites follow: N77 and N117. The tract at residues 120–154 (DALPSSEDDDDDDDSSSEEKETDNTKPNRMPVAPY) is disordered. Positions 125 to 135 (SEDDDDDDDSS) are enriched in acidic residues. Positions 136 to 145 (SEEKETDNTK) are enriched in basic and acidic residues. Ig-like C2-type domains follow at residues 158–246 (PEKM…YQLD) and 255–357 (PILQ…AWLT). Residues 160 to 177 (KMEKKLHAVPAAKTVKFK) form a heparin-binding region. A disulfide bond links C178 and C230. Residues N227, N240, N264, N296, N317, and N330 are each glycosylated (N-linked (GlcNAc...) asparagine). C277 and C341 form a disulfide bridge. Residues 377–397 (IIIYCTGAFLISCMVGSVIVY) form a helical membrane-spanning segment. Residues 398-822 (KMKSGTKKSD…QLANGGLKRR (425 aa)) are Cytoplasmic-facing. Y463 is subject to Phosphotyrosine; by autocatalysis. Positions 478–767 (LVLGKPLGEG…VALTSNQEYL (290 aa)) constitute a Protein kinase domain. ATP is bound by residues 484–490 (LGEGCFG), K514, 562–564 (EYA), and N568. Phosphotyrosine; by autocatalysis occurs at positions 583 and 585. D623 functions as the Proton acceptor in the catalytic mechanism. Residues R627 and D641 each contribute to the ATP site. Phosphotyrosine; by autocatalysis occurs at positions 653, 654, 730, and 766. Residues 778 to 792 (PSFPDTRSSTCSSGE) show a composition bias toward polar residues. Positions 778-822 (PSFPDTRSSTCSSGEDSVFSHEPLPEEPCLPRHPAQLANGGLKRR) are disordered.

This sequence belongs to the protein kinase superfamily. Tyr protein kinase family. Fibroblast growth factor receptor subfamily. Monomer. Homodimer after ligand binding. Interacts predominantly with FGF1 and FGF2, but can also interact with FGF3, FGF4, FGF5, FGF6, FGF8, FGF10, FGF19, FGF21, FGF22 and FGF23 (in vitro). Ligand specificity is determined by tissue-specific expression of isoforms, and differences in the third Ig-like domain are crucial for ligand specificity. Affinity for fibroblast growth factors (FGFs) is increased by heparan sulfate glycosaminoglycans that function as coreceptors. Likewise, KLB increases the affinity for FGF19, FGF21 and FGF23. Interacts (phosphorylated on Tyr-766) with PLCG1 (via SH2 domains). Interacts with FRS2. Interacts with RPS6KA1. Interacts (via C-terminus) with NEDD4 (via WW3 domain). Interacts with KL. Interacts with SHB (via SH2 domain). Interacts with GRB10. Interacts with ANOS1; this interaction does not interfere with FGF2-binding to FGFR1, but prevents binding of heparin-bound FGF2. Interacts with SOX2 and SOX3. Interacts with FLRT1, FLRT2 and FLRT3. Found in a ternary complex with FGF1 and ITGAV:ITGB3. Autophosphorylated. Binding of FGF family members together with heparan sulfate proteoglycan or heparin promotes receptor dimerization and autophosphorylation on tyrosine residues. Autophosphorylation occurs in trans between the two FGFR molecules present in the dimer and proceeds in a highly ordered manner. Initial autophosphorylation at Tyr-653 increases the kinase activity by a factor of 50 to 100. After this, Tyr-583 becomes phosphorylated, followed by phosphorylation of Tyr-463, Tyr-766, Tyr-583 and Tyr-585. In a third stage, Tyr-654 is autophosphorylated, resulting in a further tenfold increase of kinase activity. Phosphotyrosine residues provide docking sites for interacting proteins and so are crucial for FGFR1 function and its regulation. Post-translationally, ubiquitinated. FGFR1 is rapidly ubiquitinated by NEDD4 after autophosphorylation, leading to internalization and lysosomal degradation. CBL is recruited to activated FGFR1 via FRS2 and GRB2, and mediates ubiquitination and subsequent degradation of FGFR1. In terms of processing, N-glycosylated in the endoplasmic reticulum. The N-glycan chains undergo further maturation to an Endo H-resistant form in the Golgi apparatus. In terms of tissue distribution, detected in astrocytoma, neuroblastoma and adrenal cortex cell lines. Some isoforms are detected in foreskin fibroblast cell lines, however isoform 17, isoform 18 and isoform 19 are not detected in these cells.

Its subcellular location is the cell membrane. It is found in the nucleus. The protein resides in the cytoplasm. It localises to the cytosol. The protein localises to the cytoplasmic vesicle. The enzyme catalyses L-tyrosyl-[protein] + ATP = O-phospho-L-tyrosyl-[protein] + ADP + H(+). Present in an inactive conformation in the absence of bound ligand. Ligand binding leads to dimerization and activation by sequential autophosphorylation on tyrosine residues. Inhibited by ARQ 069; this compound maintains the kinase in an inactive conformation and inhibits autophosphorylation. Inhibited by PD173074. Its function is as follows. Tyrosine-protein kinase that acts as a cell-surface receptor for fibroblast growth factors and plays an essential role in the regulation of embryonic development, cell proliferation, differentiation and migration. Required for normal mesoderm patterning and correct axial organization during embryonic development, normal skeletogenesis and normal development of the gonadotropin-releasing hormone (GnRH) neuronal system. Phosphorylates PLCG1, FRS2, GAB1 and SHB. Ligand binding leads to the activation of several signaling cascades. Activation of PLCG1 leads to the production of the cellular signaling molecules diacylglycerol and inositol 1,4,5-trisphosphate. Phosphorylation of FRS2 triggers recruitment of GRB2, GAB1, PIK3R1 and SOS1, and mediates activation of RAS, MAPK1/ERK2, MAPK3/ERK1 and the MAP kinase signaling pathway, as well as of the AKT1 signaling pathway. Promotes phosphorylation of SHC1, STAT1 and PTPN11/SHP2. In the nucleus, enhances RPS6KA1 and CREB1 activity and contributes to the regulation of transcription. FGFR1 signaling is down-regulated by IL17RD/SEF, and by FGFR1 ubiquitination, internalization and degradation. The chain is Fibroblast growth factor receptor 1 (FGFR1) from Homo sapiens (Human).